Consider the following 477-residue polypeptide: ETS translocation variant 1 (477 aa).

Phosphoserine is present on Ser94. The tract at residues 128 to 178 (PQVGMRPSNPPTPSSTPVSPLHHASPNSAHTSKPDRAFPAHLPPSQPIQDS) is disordered. Residues Ser191 and Ser216 each carry the phosphoserine; by RPS6KA1 and RPS6KA5 modification. Residue Lys317 forms a Glycyl lysine isopeptide (Lys-Gly) (interchain with G-Cter in SUMO2) linkage. A DNA-binding region (ETS) is located at residues 335–415 (LQLWQFLVAL…AGERYVYKFV (81 aa)).

Belongs to the ETS family. Post-translationally, sumoylated. Phosphorylated at Ser-191 and Ser-216 by RPS6KA1 and RPS6KA5; phosphorylation activates transcriptional activity.

It localises to the nucleus. In terms of biological role, transcriptional activator that binds to DNA sequences containing the consensus pentanucleotide 5'-CGGA[AT]-3'. Required for olfactory dopaminergic neuron differentiation; may directly activate expression of tyrosine hydroxylase (TH). This is ETS translocation variant 1 (ETV1) from Bos taurus (Bovine).